Consider the following 428-residue polypeptide: Neuromedin-U receptor 1 (428 aa).

The Extracellular segment spans residues 1–59; sequence MTPPCLNCSIFPGALSPNASRSPLVCNISEFKWPYQPEDLNLTDEALRLKYLGPQQMKQ. N-linked (GlcNAc...) asparagine glycosylation is found at asparagine 27 and asparagine 41. Residues 60-80 traverse the membrane as a helical segment; it reads FVPICVTYLLIFVVGTLGNGL. The Cytoplasmic segment spans residues 81-96; that stretch reads TCTVILRNKTMRTPTN. Residues 97-117 form a helical membrane-spanning segment; that stretch reads FYLFSLAVSDMLVLLVGLPLE. The Extracellular segment spans residues 118–137; the sequence is LYEMQQNYPFQLGASACYFR. Cysteine 134 and cysteine 219 are joined by a disulfide. Residues 138–158 traverse the membrane as a helical segment; sequence ILLLETVCLASVLNVTALSVE. The Cytoplasmic portion of the chain corresponds to 159–181; that stretch reads RYVAVVRPLQAKSVMTRAHVRRM. Residues 182 to 202 form a helical membrane-spanning segment; the sequence is VGAIWVLATLFSLPNTSLHGL. At 203–235 the chain is on the extracellular side; the sequence is SQLTVPCRGPVPDSAICSLVGPMDFYKLVVLTT. A helical transmembrane segment spans residues 236 to 256; it reads ALLFFCLPMVTISVLYLLIGL. Over 257-294 the chain is Cytoplasmic; it reads RLRRERMLLQVEVKGRKTAATQETSHRRIQLQDRGRRQ. A helical membrane pass occupies residues 295–315; sequence VTKMLFALVVVFGICWAPFHA. Residues 316 to 339 are Extracellular-facing; it reads DRIMWSLVYGHSTEGLHLAYQCVH. Residues 340-360 form a helical membrane-spanning segment; it reads IASGIFFYLGSAANPVLYSLM. At 361 to 428 the chain is on the cytoplasmic side; the sequence is STRFRETFLQ…PGCQQETDPS (68 aa).

Belongs to the G-protein coupled receptor 1 family. Ubiquitously expressed.

It localises to the cell membrane. In terms of biological role, receptor for the neuromedin-U and neuromedin-S neuropeptides. The chain is Neuromedin-U receptor 1 (Nmur1) from Mus musculus (Mouse).